The chain runs to 137 residues: MTMSDDNENEQPLNLDIPDHLEYSEEHAWVDRSVDPAIIGITEYAADQLGELVFVDLPEPGARVEAGDEIVELESSKAVQPLISPVAGTVKYVNRDVADDPSVVNGDPYGEGWLLKVELDDDEPELLSADEYAKVVR.

Positions 36–118 constitute a Lipoyl-binding domain; it reads PAIIGITEYA…YGEGWLLKVE (83 aa). At Lys-77 the chain carries N6-lipoyllysine.

This sequence belongs to the GcvH family. The glycine cleavage system is composed of four proteins: P, T, L and H. Requires (R)-lipoate as cofactor.

The glycine cleavage system catalyzes the degradation of glycine. The H protein shuttles the methylamine group of glycine from the P protein to the T protein. This chain is Glycine cleavage system H protein, found in Bifidobacterium longum (strain NCC 2705).